A 450-amino-acid polypeptide reads, in one-letter code: Probable glycine dehydrogenase (decarboxylating) subunit 1 (450 aa).

This sequence belongs to the GcvP family. N-terminal subunit subfamily. In terms of assembly, the glycine cleavage system is composed of four proteins: P, T, L and H. In this organism, the P 'protein' is a heterodimer of two subunits.

The enzyme catalyses N(6)-[(R)-lipoyl]-L-lysyl-[glycine-cleavage complex H protein] + glycine + H(+) = N(6)-[(R)-S(8)-aminomethyldihydrolipoyl]-L-lysyl-[glycine-cleavage complex H protein] + CO2. Its function is as follows. The glycine cleavage system catalyzes the degradation of glycine. The P protein binds the alpha-amino group of glycine through its pyridoxal phosphate cofactor; CO(2) is released and the remaining methylamine moiety is then transferred to the lipoamide cofactor of the H protein. The protein is Probable glycine dehydrogenase (decarboxylating) subunit 1 of Brevibacillus brevis (strain 47 / JCM 6285 / NBRC 100599).